Consider the following 298-residue polypeptide: MTRSSPKSILRRVAAHEGAPKILQVLKEDGAVIIRGFLNQNLFQKLNKEMEDELAKRPLICEHNGEWVSGLAGSQTRRLNQLPAFSPTFRQEILNHPLFHEICEPLFGTHGCDYWMNTATVVQIGPGNAAQSLHRDQELYPVFNPIGKDAPEALVNFFCALSTFTDENGATRVIPGSHQWDDFTTDVTRCVPQTIPAEMEAGDCLLFSGKTVHGGGANRSKDNVRRGMALGVQATYLTAEENYQHIPREIVESMTPLAQKMIHWRSSYCPGGAGLWQINGTELANEIGLKANQPKKTI.

The Fe cation site is built by His134, Asp136, and His213.

Belongs to the PhyH family. Homodimer. The cofactor is Fe cation.

It carries out the reaction aculene D + 2-oxoglutarate + O2 = aculene C + succinate + CO2 + H2O. The enzyme catalyses aculene B + 2-oxoglutarate + O2 = aculene A + succinate + CO2 + H2O. It participates in secondary metabolite biosynthesis. Its function is as follows. Dioxygenase; part of the gene cluster that mediates the biosynthesis of aculenes, a unique type of norsesquiterpenes that contain a nordaucane skeleton linked to an L-proline moiety and are of mixed biosynthetic origin. The pathway begins with the synthesis of dauca-4,7-diene by the terpene cyclase aneC using farnesyl pyrophosphate (FPP) as substrate. The cytochrome P450 monooxygenase aneF then performs the initial oxidation at C-12 of dauca-4,7-diene to yield asperaculane D. Asperaculane D is substrate of the cytochrome P450 monooxygenase aneD for C-10 hydroxylation to yield asperaculane E. The cytochrome P450 monooxygenase aneG then converts asperaculane E into aculene D via C-2 oxidation. The monomodular nonribosomal peptide synthase aneB adenylates L-proline and the thiohydrolase aneE transfers this activated L-proline derivative to aculenes D and C to produce respectively aculenes B and A. The dioxygenase aneA converts aculene D into aculene C, and aculene B into aculene A by introducing the 5,6-alkene moiety. Asperculanes A, B, C and F, as well as 14-prolyl asperculane C, might be shunt products of the pathway. The polypeptide is Dioxygenase aneA (Aspergillus aculeatus (strain ATCC 16872 / CBS 172.66 / WB 5094)).